The chain runs to 61 residues: Small ribosomal subunit protein uS14 (61 aa).

Cysteine 24, cysteine 27, cysteine 40, and cysteine 43 together coordinate Zn(2+).

The protein belongs to the universal ribosomal protein uS14 family. Zinc-binding uS14 subfamily. In terms of assembly, part of the 30S ribosomal subunit. Contacts proteins S3 and S10. Zn(2+) serves as cofactor.

Binds 16S rRNA, required for the assembly of 30S particles and may also be responsible for determining the conformation of the 16S rRNA at the A site. The sequence is that of Small ribosomal subunit protein uS14 from Thermus aquaticus.